Here is a 139-residue protein sequence, read N- to C-terminus: Small ribosomal subunit protein uS19 (139 aa).

Belongs to the universal ribosomal protein uS19 family.

In terms of biological role, protein S19 forms a complex with S13 that binds strongly to the 16S ribosomal RNA. In Ignicoccus hospitalis (strain KIN4/I / DSM 18386 / JCM 14125), this protein is Small ribosomal subunit protein uS19.